The following is a 453-amino-acid chain: MSKISEVVQRARAAFNSGKTRPLQFRIQQLEALRRMIKEHEKDLAGALTADLHKNEWNAYYEEVVYVLEEIEYMIKKLPEWAADEPVEKTPQTQQDECYIHSEPLGVVLIIGTWNYPFTVTIQPMVGAIAAGNAVVIKPSELSENMANLLATIIPQYLDRDLYPVISGGIPETTELLKERFDHILYTGNTAVGKVIMMAAAKHLTPVTLELGGKNPCYVDKDCDLDIACRRIAWGKFMNSGQTCVAPDYILCDPSIQNQIVEKLKKALKEFYGEDAKKSRDYGRIINSRHFQRVMGLMEGQKVAYGGTGDAATRYIAPTILIDVDTQSQVMQEEIFGPVMPIVCVRSLEEAIQFINQREKPLALYVFSLNDKMIKKMIAETSSGGVTANDVIVHVSVHSLPYGGVGNSGMGSYHGKKSFETFSHCRSCLVRPLLNDESLKTRYPPSLAKMTRH.

An N-acetylserine modification is found at serine 2. Lysine 178 is modified (N6-acetyllysine). Residue 188-193 (GNTAVG) coordinates NAD(+). N6-acetyllysine is present on lysine 194. Catalysis depends on residues glutamate 210 and cysteine 244.

This sequence belongs to the aldehyde dehydrogenase family. In terms of assembly, homodimer.

It localises to the cytoplasm. The enzyme catalyses an aldehyde + NAD(+) + H2O = a carboxylate + NADH + 2 H(+). It catalyses the reaction octanal + NAD(+) + H2O = octanoate + NADH + 2 H(+). Its function is as follows. ALDHs play a major role in the detoxification of alcohol-derived acetaldehyde. They are involved in the metabolism of corticosteroids, biogenic amines, neurotransmitters, and lipid peroxidation. Oxidizes medium and long chain aldehydes into non-toxic fatty acids. Preferentially oxidizes aromatic aldehyde substrates. Comprises about 50 percent of corneal epithelial soluble proteins. May play a role in preventing corneal damage caused by ultraviolet light. In Canis lupus familiaris (Dog), this protein is Aldehyde dehydrogenase, dimeric NADP-preferring (ALDH3A1).